The sequence spans 311 residues: JNK1/MAPK8-associated membrane protein (311 aa).

The Lumenal segment spans residues 1 to 57 (MAVDIQPACLGLYCGKTLLFKNGSSEIYGECGVCPRGQRTNAQKYCQPCTESPELYD). An N-linked (GlcNAc...) asparagine glycan is attached at asparagine 22. The chain crosses the membrane as a helical span at residues 58-78 (WLYLGFMAMLPLVLHWFFIEW). Topologically, residues 79–87 (YSGKKSSSA) are cytoplasmic. Residues 88-108 (LFQHITALFECTMAAIITLLV) form a helical membrane-spanning segment. The Lumenal segment spans residues 109-149 (SDPVGVLYIRSCRVLMLSDWYTMLYNPSPDYVTTVHCTHEA). The helical transmembrane segment at 150–170 (VYPLYTIVFVYYAFCLVLMML) threads the bilayer. The Cytoplasmic portion of the chain corresponds to 171–188 (LRPLLVKKIACGLGKSDR). Residues 189–209 (FKSIYAALYFFPILTVLQAVG) form a helical membrane-spanning segment. A topological domain (lumenal) is located at residue glycine 210. A helical membrane pass occupies residues 211 to 231 (GLLYYAFPYIILVLSLVTLAV). Topologically, residues 232-250 (YMSASEIENCYDLLVRKKR) are cytoplasmic. Residues 251–271 (LIVLFSHWLLHAYGIVSISRV) form a helical membrane-spanning segment. Residues 272–277 (DRLEHD) lie on the Lumenal side of the membrane. The chain crosses the membrane as a helical span at residues 278 to 298 (LPLLALVPTPALFYLFTAKFT). Residues 299-311 (EPSRILSEGANGH) are Cytoplasmic-facing.

In terms of assembly, interacts with RNF5 and MAPK8, but not with MAPK9. Binding to MAPK8 occurs before and after exposure to stress, such as UV irradiation. After exposure to stress, interacts with phosphorylated MAPK8. Competes with DUSP10 for MAPK8 binding. Associates with multiple components of the proteasome and with ERAD regulatory proteins, including AMFR/GP78, CANX, PSMC1, PSMC2, PSMC3/TBP1, PSMC5, PSMC6, PSMD8, SEC61-ALPHA and UFD1. Post-translationally, ubiquitinated by RNF5 via 'Lys-63'-linked ubiquitin linkage in a UBE2N-dependent manner. Ubiquitination decreases association with components of the proteasome and ERAD. As to expression, expressed in numerous tissues, including brain, spleen, thymus, liver, kidney and testis.

Its subcellular location is the endoplasmic reticulum membrane. Its function is as follows. Regulates the duration of MAPK8 activity in response to various stress stimuli. Facilitates degradation of misfolded endoplasmic reticulum (ER) proteins through the recruitment of components of the proteasome and endoplasmic reticulum-associated degradation (ERAD) system. This chain is JNK1/MAPK8-associated membrane protein (Jkamp), found in Mus musculus (Mouse).